We begin with the raw amino-acid sequence, 152 residues long: Deoxyuridine 5'-triphosphate nucleotidohydrolase (152 aa).

Substrate is bound by residues R71–G73, N84, and T88–D90.

The protein belongs to the dUTPase family. Mg(2+) is required as a cofactor.

It carries out the reaction dUTP + H2O = dUMP + diphosphate + H(+). The protein operates within pyrimidine metabolism; dUMP biosynthesis; dUMP from dCTP (dUTP route): step 2/2. This enzyme is involved in nucleotide metabolism: it produces dUMP, the immediate precursor of thymidine nucleotides and it decreases the intracellular concentration of dUTP so that uracil cannot be incorporated into DNA. The sequence is that of Deoxyuridine 5'-triphosphate nucleotidohydrolase from Maricaulis maris (strain MCS10) (Caulobacter maris).